Here is a 271-residue protein sequence, read N- to C-terminus: 3-methyl-2-oxobutanoate hydroxymethyltransferase 1 (271 aa).

The Mg(2+) site is built by Asp53 and Asp92. Residues 53–54, Asp92, and Lys120 contribute to the 3-methyl-2-oxobutanoate site; that span reads DS. Glu122 is a binding site for Mg(2+). Residue Glu189 is the Proton acceptor of the active site.

Belongs to the PanB family. In terms of assembly, homodecamer; pentamer of dimers. Requires Mg(2+) as cofactor.

The protein localises to the cytoplasm. It carries out the reaction 3-methyl-2-oxobutanoate + (6R)-5,10-methylene-5,6,7,8-tetrahydrofolate + H2O = 2-dehydropantoate + (6S)-5,6,7,8-tetrahydrofolate. It functions in the pathway cofactor biosynthesis; (R)-pantothenate biosynthesis; (R)-pantoate from 3-methyl-2-oxobutanoate: step 1/2. Catalyzes the reversible reaction in which hydroxymethyl group from 5,10-methylenetetrahydrofolate is transferred onto alpha-ketoisovalerate to form ketopantoate. This is 3-methyl-2-oxobutanoate hydroxymethyltransferase 1 from Burkholderia ambifaria (strain ATCC BAA-244 / DSM 16087 / CCUG 44356 / LMG 19182 / AMMD) (Burkholderia cepacia (strain AMMD)).